A 300-amino-acid polypeptide reads, in one-letter code: uncharacterized protein (300 aa).

The Proton donor role is filled by Tyr-53. 210–220 contributes to the NADP(+) binding site; that stretch reads SPLAGGKVFTE.

It belongs to the aldo/keto reductase family. Aldo/keto reductase 2 subfamily.

This is an uncharacterized protein from Bacillus subtilis (strain 168).